The primary structure comprises 562 residues: Glutamate--tRNA ligase (562 aa).

The short motif at 90–100 (PNPSGLLHIGH) is the 'HIGH' region element.

The protein belongs to the class-I aminoacyl-tRNA synthetase family. Glutamate--tRNA ligase type 2 subfamily.

The protein resides in the cytoplasm. It catalyses the reaction tRNA(Glu) + L-glutamate + ATP = L-glutamyl-tRNA(Glu) + AMP + diphosphate. Catalyzes the attachment of glutamate to tRNA(Glu) in a two-step reaction: glutamate is first activated by ATP to form Glu-AMP and then transferred to the acceptor end of tRNA(Glu). This is Glutamate--tRNA ligase from Nanoarchaeum equitans (strain Kin4-M).